A 197-amino-acid polypeptide reads, in one-letter code: MYTRPLARLIEHLQRLPGIGPKTAQRLAFHLLRRPKSEALQLAQALVEATEQIGVCSRCFNLSAEDPCDICRQPGRQGETICVVAEPRDLVAIERTREFKGHYHVLGGLINPMEGIGPEQLRIKELLQRVGADTVKEVILAINPSTEGEMTTMYLSKYVKVLGPRVTRIAFGLPVGGDLEYADEMTLARALEGRREI.

The C4-type zinc finger occupies 56-71; it reads CSRCFNLSAEDPCDIC. The 96-residue stretch at 79–174 folds into the Toprim domain; that stretch reads ETICVVAEPR…RVTRIAFGLP (96 aa).

The protein belongs to the RecR family.

May play a role in DNA repair. It seems to be involved in an RecBC-independent recombinational process of DNA repair. It may act with RecF and RecO. The chain is Recombination protein RecR from Gloeobacter violaceus (strain ATCC 29082 / PCC 7421).